Consider the following 149-residue polypeptide: Calmodulin (149 aa).

An N-acetylalanine modification is found at A2. 4 consecutive EF-hand domains span residues 8-43, 44-79, 81-116, and 117-149; these read EQVS…LGQN, PSES…KMKD, DSEE…IGEK, and LTDD…MMQK. Residues D21, D23, D25, Q27, E32, D57, D59, N61, T63, E68, D94, D96, N98, E105, D130, D132, D134, R136, and E141 each coordinate Ca(2+).

The protein belongs to the calmodulin family.

Its function is as follows. Calmodulin mediates the control of a large number of enzymes, ion channels and other proteins by Ca(2+). Among the enzymes to be stimulated by the calmodulin-Ca(2+) complex are a number of protein kinases and phosphatases. This Emericella nidulans (strain FGSC A4 / ATCC 38163 / CBS 112.46 / NRRL 194 / M139) (Aspergillus nidulans) protein is Calmodulin (camA).